A 502-amino-acid chain; its full sequence is Probable cytosol aminopeptidase (502 aa).

2 residues coordinate Mn(2+): Lys-267 and Asp-272. Residue Lys-279 is part of the active site. Mn(2+) is bound by residues Asp-290, Asp-349, and Glu-351. Residue Arg-353 is part of the active site.

The protein belongs to the peptidase M17 family. Mn(2+) is required as a cofactor.

Its subcellular location is the cytoplasm. The catalysed reaction is Release of an N-terminal amino acid, Xaa-|-Yaa-, in which Xaa is preferably Leu, but may be other amino acids including Pro although not Arg or Lys, and Yaa may be Pro. Amino acid amides and methyl esters are also readily hydrolyzed, but rates on arylamides are exceedingly low.. The enzyme catalyses Release of an N-terminal amino acid, preferentially leucine, but not glutamic or aspartic acids.. Presumably involved in the processing and regular turnover of intracellular proteins. Catalyzes the removal of unsubstituted N-terminal amino acids from various peptides. This is Probable cytosol aminopeptidase from Aeromonas hydrophila subsp. hydrophila (strain ATCC 7966 / DSM 30187 / BCRC 13018 / CCUG 14551 / JCM 1027 / KCTC 2358 / NCIMB 9240 / NCTC 8049).